The chain runs to 396 residues: Elongation factor Tu (396 aa).

A tr-type G domain is found at lysine 10–glutamate 206. Positions glycine 19–threonine 26 are G1. GTP is bound at residue glycine 19–threonine 26. Threonine 26 is a Mg(2+) binding site. The tract at residues glycine 60 to serine 64 is G2. The tract at residues aspartate 81–glycine 84 is G3. GTP contacts are provided by residues aspartate 81–histidine 85 and asparagine 136–aspartate 139. Positions asparagine 136–aspartate 139 are G4. Positions serine 174 to leucine 176 are G5.

It belongs to the TRAFAC class translation factor GTPase superfamily. Classic translation factor GTPase family. EF-Tu/EF-1A subfamily. Monomer.

It is found in the cytoplasm. It catalyses the reaction GTP + H2O = GDP + phosphate + H(+). Its function is as follows. GTP hydrolase that promotes the GTP-dependent binding of aminoacyl-tRNA to the A-site of ribosomes during protein biosynthesis. This chain is Elongation factor Tu, found in Bradyrhizobium diazoefficiens (strain JCM 10833 / BCRC 13528 / IAM 13628 / NBRC 14792 / USDA 110).